We begin with the raw amino-acid sequence, 210 residues long: Oxygen-insensitive NADPH nitroreductase (210 aa).

150 to 155 (GVSLMG) serves as a coordination point for NADP(+).

This sequence belongs to the nitroreductase family.

Functionally, reduction of a variety of nitroaromatic compounds using NADPH as source of reducing equivalents; two electrons are transferred. This is Oxygen-insensitive NADPH nitroreductase (rdxA) from Helicobacter pylori (strain J99 / ATCC 700824) (Campylobacter pylori J99).